A 310-amino-acid polypeptide reads, in one-letter code: Homeobox protein knotted-1-like 2 (310 aa).

A disordered region spans residues 178–208; it reads SDDGAVSSDEELREDDDIAADDSQQRSNDRD. A compositionally biased stretch (acidic residues) spans 185–197; sequence SDEELREDDDIAA. The region spanning 208–228 is the ELK domain; that stretch reads DLKDQLLRKFGSHISSLKLEF. Positions 229-292 form a DNA-binding region, homeobox; TALE-type; it reads SKKKKKGKLP…NQRKRHWKPS (64 aa).

The protein belongs to the TALE/KNOX homeobox family. In terms of assembly, may form heterodimeric complex with the TALE/BELL protein BEL1, BLH1 and BLH2. Interacts with OFP12 and OFP14. Interacts with BZIP30. As to expression, expressed predominantly in shoot apices of seedlings, in the receptacle and developing pistil of flowers and in axillary buds of inflorescence stems.

Its subcellular location is the nucleus. May play a role in meristem function, and may be involved in maintaining cells in an undifferentiated, meristematic state. Probably binds to the DNA sequence 5'-TGAC-3'. In Arabidopsis thaliana (Mouse-ear cress), this protein is Homeobox protein knotted-1-like 2 (KNAT2).